A 638-amino-acid polypeptide reads, in one-letter code: 1,4-alpha-glucan branching enzyme GlgB (638 aa).

Asp320 acts as the Nucleophile in catalysis. The active-site Proton donor is Glu373.

The protein belongs to the glycosyl hydrolase 13 family. GlgB subfamily. Monomer.

The catalysed reaction is Transfers a segment of a (1-&gt;4)-alpha-D-glucan chain to a primary hydroxy group in a similar glucan chain.. Its pathway is glycan biosynthesis; glycogen biosynthesis. Its function is as follows. Catalyzes the formation of the alpha-1,6-glucosidic linkages in glycogen by scission of a 1,4-alpha-linked oligosaccharide from growing alpha-1,4-glucan chains and the subsequent attachment of the oligosaccharide to the alpha-1,6 position. The protein is 1,4-alpha-glucan branching enzyme GlgB of Oleidesulfovibrio alaskensis (strain ATCC BAA-1058 / DSM 17464 / G20) (Desulfovibrio alaskensis).